Consider the following 149-residue polypeptide: Pleckstrin homology domain-containing family J member 1 (149 aa).

The 94-residue stretch at 15 to 108 (PAEKAAEILM…WIEALKRASY (94 aa)) folds into the PH domain.

This is Pleckstrin homology domain-containing family J member 1 (PLEKHJ1) from Gallus gallus (Chicken).